Here is a 410-residue protein sequence, read N- to C-terminus: MLPLIKQEDIKPEPDFTIQYRNKIIDTAGCIVISDSEEEQGEEVETRGATASSPSTGSGTPRVTSPTHPLSQMNHPPLPDPLGRPDEDSSSSSSSCSSASDSESESEEMKCSSGGGASVTSSHHGRGGFGGAASSSLLSCGHQSSGGASTGPRKKKSKRISELDNEKVRNIMKDKNTPFCTPNVQTRRGRVKIDEVSRMFRNTNRSLEYKNLPFTIPSMHQVLDEAIKACKTMQVNNKGIQIIYTRNHEVKSEVDAVRCRLGTMCNLALSTPFLMEHTMPVTHPPKVAQRTADACNEGVKAAWSLKELHTHQLCPRSSDYRNMIIHAATPVDLLGALNLCLPLMQKFPKQVMVRIFSTNQGGFMLPIYETATKAYAVGQFEQPTETPPEDLDTLSLAIEAAIQDLRNKSQ.

The tract at residues 36-166 (SEEEQGEEVE…SKRISELDNE (131 aa)) is disordered. Low complexity-rich tracts occupy residues 47 to 67 (RGATASSPSTGSGTPRVTSPT), 90 to 101 (SSSSSSCSSASD), and 132 to 147 (AASSSLLSCGHQSSGG). The segment at 257–283 (VRCRLGTMCNLALSTPFLMEHTMPVTH) is a zinc-finger region.

In terms of biological role, activates the E1.7 promoter. This activation is augmented by the IE1 protein. It down-regulates the transcription of genes under the control of the major IE promoter. The protein is 45 kDa immediate-early protein 2 (UL122) of Homo sapiens (Human).